The sequence spans 365 residues: tRNA 2-selenouridine synthase (365 aa).

The 124-residue stretch at 15–138 (LVNDHPIMDA…MRQFLIETID (124 aa)) folds into the Rhodanese domain. Residue Cys-98 is the S-selanylcysteine intermediate of the active site.

It belongs to the SelU family. In terms of assembly, monomer.

It carries out the reaction 5-methylaminomethyl-2-thiouridine(34) in tRNA + selenophosphate + (2E)-geranyl diphosphate + H2O + H(+) = 5-methylaminomethyl-2-selenouridine(34) in tRNA + (2E)-thiogeraniol + phosphate + diphosphate. The enzyme catalyses 5-methylaminomethyl-2-thiouridine(34) in tRNA + (2E)-geranyl diphosphate = 5-methylaminomethyl-S-(2E)-geranyl-thiouridine(34) in tRNA + diphosphate. It catalyses the reaction 5-methylaminomethyl-S-(2E)-geranyl-thiouridine(34) in tRNA + selenophosphate + H(+) = 5-methylaminomethyl-2-(Se-phospho)selenouridine(34) in tRNA + (2E)-thiogeraniol. The catalysed reaction is 5-methylaminomethyl-2-(Se-phospho)selenouridine(34) in tRNA + H2O = 5-methylaminomethyl-2-selenouridine(34) in tRNA + phosphate. Involved in the post-transcriptional modification of the uridine at the wobble position (U34) of tRNA(Lys), tRNA(Glu) and tRNA(Gln). Catalyzes the conversion of 2-thiouridine (S2U-RNA) to 2-selenouridine (Se2U-RNA). Acts in a two-step process involving geranylation of 2-thiouridine (S2U) to S-geranyl-2-thiouridine (geS2U) and subsequent selenation of the latter derivative to 2-selenouridine (Se2U) in the tRNA chain. In Shewanella pealeana (strain ATCC 700345 / ANG-SQ1), this protein is tRNA 2-selenouridine synthase.